A 563-amino-acid chain; its full sequence is MNSGLSSAIIPVHPTKISVHLFEILQGKYAYVKGQTLHSSLRNPGVFSRQLFIHIYKTVLSSCTYDHVISDWHKYEDNIKTRWKNENFTSDSFRKSTYQSWAQTMRMTIDQLVLNNIYQIIHSKITSYERYTDWVMALGLVPVVKQLPDEKLIRQIQSQLSAASKIAAGNDRVMRTILSALEYTVTDMLETLTSIYIPDYSEVTIDYRSKDQLFVGTYKGKHIAVEVITRPVIAKNIFFDSPVQRLFQNIMSCYRTTEHAKLCQLLNTAPIKAICGASTQNVYKDILSHLEQNSQKSDPKRELLSLLVKLAENKTVSGVTDVVEEFITDVSQNIVDKNKLFGSQESTTQGLKKHVSNNVFKCLTSQINEQFDTINKLEKERELYLGKINQIETQLLHLTQDEKQSVSPDNVLVSDTFCSLQTLQSSKLSMTSSDVPKGAAVLNSFFSQYVPPFRELNKDLTLLWESEIFHTFKLTPVVDPQGQRLYVKYTQDTVTILIGPFTYSITKLHQMELINDIFVSMSFNDIASYIYSTSRLAVYIADIGNKYCPSETDGSSSSSVTGS.

The protein belongs to the herpesviridae portal protein family. In terms of assembly, homododecamerizes. Interacts with terminase subunits TRM1 and TRM3.

It localises to the virion. It is found in the host nucleus. Its function is as follows. Forms a portal in the viral capsid through which viral DNA is translocated during DNA packaging. Assembles as a dodecamer at a single fivefold axe of the T=16 icosahedric capsid. Binds to the molecular motor that translocates the viral DNA, termed terminase. This chain is Portal protein (43), found in Saimiri sciureus (Common squirrel monkey).